A 213-amino-acid polypeptide reads, in one-letter code: Nucleoside triphosphate pyrophosphatase (213 aa).

The active-site Proton acceptor is Asp77.

The protein belongs to the Maf family. A divalent metal cation serves as cofactor.

The protein localises to the cytoplasm. The enzyme catalyses a ribonucleoside 5'-triphosphate + H2O = a ribonucleoside 5'-phosphate + diphosphate + H(+). The catalysed reaction is a 2'-deoxyribonucleoside 5'-triphosphate + H2O = a 2'-deoxyribonucleoside 5'-phosphate + diphosphate + H(+). Functionally, nucleoside triphosphate pyrophosphatase. May have a dual role in cell division arrest and in preventing the incorporation of modified nucleotides into cellular nucleic acids. The chain is Nucleoside triphosphate pyrophosphatase from Cutibacterium acnes (strain DSM 16379 / KPA171202) (Propionibacterium acnes).